Here is a 218-residue protein sequence, read N- to C-terminus: Elongation factor Ts (218 aa).

Residues T82–V85 form an involved in Mg(2+) ion dislocation from EF-Tu region.

It belongs to the EF-Ts family.

Its subcellular location is the cytoplasm. Associates with the EF-Tu.GDP complex and induces the exchange of GDP to GTP. It remains bound to the aminoacyl-tRNA.EF-Tu.GTP complex up to the GTP hydrolysis stage on the ribosome. This chain is Elongation factor Ts, found in Prochlorococcus marinus (strain MIT 9211).